Consider the following 260-residue polypeptide: Proteasome subunit alpha (260 aa).

The tract at residues 241–260 (VEEEEVKEKEEDYSELDSHY) is disordered.

The protein belongs to the peptidase T1A family. The 20S proteasome core is composed of 14 alpha and 14 beta subunits that assemble into four stacked heptameric rings, resulting in a barrel-shaped structure. The two inner rings, each composed of seven catalytic beta subunits, are sandwiched by two outer rings, each composed of seven alpha subunits. The catalytic chamber with the active sites is on the inside of the barrel. Has a gated structure, the ends of the cylinder being occluded by the N-termini of the alpha-subunits. Is capped at one or both ends by the proteasome regulatory ATPase, PAN.

It is found in the cytoplasm. The formation of the proteasomal ATPase PAN-20S proteasome complex, via the docking of the C-termini of PAN into the intersubunit pockets in the alpha-rings, triggers opening of the gate for substrate entry. Interconversion between the open-gate and close-gate conformations leads to a dynamic regulation of the 20S proteasome proteolysis activity. Its function is as follows. Component of the proteasome core, a large protease complex with broad specificity involved in protein degradation. In Pyrococcus horikoshii (strain ATCC 700860 / DSM 12428 / JCM 9974 / NBRC 100139 / OT-3), this protein is Proteasome subunit alpha.